The chain runs to 156 residues: Ribosomal RNA large subunit methyltransferase H (156 aa).

S-adenosyl-L-methionine is bound by residues Leu73, Gly104, and 123–128 (LSAMTL).

This sequence belongs to the RNA methyltransferase RlmH family. Homodimer.

It localises to the cytoplasm. It carries out the reaction pseudouridine(1915) in 23S rRNA + S-adenosyl-L-methionine = N(3)-methylpseudouridine(1915) in 23S rRNA + S-adenosyl-L-homocysteine + H(+). Specifically methylates the pseudouridine at position 1915 (m3Psi1915) in 23S rRNA. In Laribacter hongkongensis (strain HLHK9), this protein is Ribosomal RNA large subunit methyltransferase H.